Consider the following 158-residue polypeptide: Transcriptional repressor NrdR (158 aa).

Residues 3 to 34 fold into a zinc finger; it reads CPSCQNTDSRVLESRAADAGRSVRRRRECLHC. An ATP-cone domain is found at 49–139; the sequence is ITVLKRNGNR…VYRDFRGVND (91 aa).

Belongs to the NrdR family. Zn(2+) serves as cofactor.

Its function is as follows. Negatively regulates transcription of bacterial ribonucleotide reductase nrd genes and operons by binding to NrdR-boxes. This chain is Transcriptional repressor NrdR, found in Prochlorococcus marinus (strain MIT 9313).